Reading from the N-terminus, the 468-residue chain is E3 ubiquitin-protein ligase RGLG2 (468 aa).

Residues methionine 1 to lysine 89 form a disordered region. Glycine 2 carries the N-myristoyl glycine lipid modification. Residues glutamine 12–asparagine 45 are compositionally biased toward low complexity. Over residues tyrosine 46–leucine 65 the composition is skewed to pro residues. Positions tyrosine 66–tyrosine 84 are enriched in low complexity. The 221-residue stretch at asparagine 122–leucine 342 folds into the VWFA domain. A disordered region spans residues phenylalanine 369–threonine 416. The segment at cysteine 425–arginine 458 adopts an RING-type zinc-finger fold.

Interacts with the heterodimer UBC35/UEV1B, UBC35 alone, PIN1, but not with UCB2, UCB9, UEV1B or UEV1C alone. Interacts with ERF053. Post-translationally, N-myristoylated. In terms of tissue distribution, ubiquitously expressed.

Its subcellular location is the cell membrane. It is found in the nucleus. It carries out the reaction S-ubiquitinyl-[E2 ubiquitin-conjugating enzyme]-L-cysteine + [acceptor protein]-L-lysine = [E2 ubiquitin-conjugating enzyme]-L-cysteine + N(6)-ubiquitinyl-[acceptor protein]-L-lysine.. E3 ubiquitin-protein ligase that mediates the formation of 'Lys-63'-linked ubiquitin chains. Regulates apical dominance by acting on the auxin transport proteins abundance. Mediates ubiquitination and subsequent proteasomal degradation of ERF053 in response to drought stress. Acts as a negative regulator of drought stress response. The protein is E3 ubiquitin-protein ligase RGLG2 of Arabidopsis thaliana (Mouse-ear cress).